The chain runs to 156 residues: ATP synthase subunit b (156 aa).

Residues isoleucine 3–threonine 23 form a helical membrane-spanning segment.

Belongs to the ATPase B chain family. As to quaternary structure, F-type ATPases have 2 components, F(1) - the catalytic core - and F(0) - the membrane proton channel. F(1) has five subunits: alpha(3), beta(3), gamma(1), delta(1), epsilon(1). F(0) has three main subunits: a(1), b(2) and c(10-14). The alpha and beta chains form an alternating ring which encloses part of the gamma chain. F(1) is attached to F(0) by a central stalk formed by the gamma and epsilon chains, while a peripheral stalk is formed by the delta and b chains.

It localises to the cell inner membrane. Its function is as follows. F(1)F(0) ATP synthase produces ATP from ADP in the presence of a proton or sodium gradient. F-type ATPases consist of two structural domains, F(1) containing the extramembraneous catalytic core and F(0) containing the membrane proton channel, linked together by a central stalk and a peripheral stalk. During catalysis, ATP synthesis in the catalytic domain of F(1) is coupled via a rotary mechanism of the central stalk subunits to proton translocation. Component of the F(0) channel, it forms part of the peripheral stalk, linking F(1) to F(0). This chain is ATP synthase subunit b, found in Xanthomonas axonopodis pv. citri (strain 306).